We begin with the raw amino-acid sequence, 261 residues long: MARGPKKHLKRLNAPKAWMLDKLGGVYAPRPSTGPHKLRESLPLVIFLRNRLKYALTNSEVTKIVMQRLIKVDGKVRTDPNYPSGFMDVITIEKTGEFFRLIYDVKGRFTIHRITAEEAKYKLCKVKRVQTGPKGIPFLVTHDGRTIRYPDPIIKVNDTIQLEIANSKIMDSIKFDSGNLCMITGGRNLGRVGTVVNRERHPGSFDIVHIKDSQGHTFANRLNNVFIIGKGSKAYVSLPRGKGVKLSIAEERDKRLAAKTH.

The region spanning 42–104 is the S4 RNA-binding domain; sequence LPLVIFLRNR…TGEFFRLIYD (63 aa).

This sequence belongs to the eukaryotic ribosomal protein eS4 family.

In Carabus granulatus (Ground beetle), this protein is Small ribosomal subunit protein eS4 (RpS4).